A 523-amino-acid chain; its full sequence is BTB/POZ domain-containing protein 3 (523 aa).

Residues 85–114 form an ANK repeat; that stretch reads FDYSPLVLASLCGHEPVVKFLLENGALCER. 2 BTB domains span residues 167 to 223 and 306 to 373; these read TDIV…RYLY and HDAY…DIAP.

As to quaternary structure, interacts with cul3. Ubiquitinated and targeted for cul3-dependent degradation.

It is found in the cytoplasm. The protein operates within protein modification; protein ubiquitination. Probable substrate-specific adapter of an E3 ubiquitin-protein ligase complex which mediates the ubiquitination and subsequent proteasomal degradation of target proteins. The sequence is that of BTB/POZ domain-containing protein 3 (btb3) from Schizosaccharomyces pombe (strain 972 / ATCC 24843) (Fission yeast).